The sequence spans 338 residues: MGKLTLLQCLSGHRGRVWGAGWHPRDPVLATCGEDKTIRIWADDGTGRWVPKTVLSDGHTRTIRDVAWSPCGRFLASASFDATVAIWDRRSGEFECNATLEGHENEVKSVSWSKSGALLATCSRDKSVWIWEVAQEDEYECAAVLNTHSQDVKKVEWHPNEDVLASASYDNTIQLYREDLADSDWSSFDTLASHDSTVWSIAFDASGSRLASCSDDQTVRIWQEYKPGNEFGVACPDGKTPVWKCVCTLSGFHSRAVYDISWCKKTGLIATACGDDMVRIFREVAGSPANEPTFEMVASKHAHSQDANTVEWSPTVAGLLVTTSDDGDVKLWKFEDDE.

WD repeat units follow at residues 12–51 (GHRG…RWVP), 58–97 (GHTR…FECN), 102–141 (GHEN…EYEC), 147–186 (THSQ…SDWS), 193–232 (SHDS…NEFG), 234–252 (ACPD…LSGF), 253–291 (HSRA…PANE), and 302–338 (AHSQ…EDDE).

The protein belongs to the WD repeat CIA1 family.

In terms of biological role, essential component of the cytosolic iron-sulfur (Fe/S) protein assembly machinery. Required for the maturation of extramitochondrial Fe/S proteins. This is Probable cytosolic iron-sulfur protein assembly protein Ciao1 from Culex quinquefasciatus (Southern house mosquito).